Consider the following 317-residue polypeptide: L-lactate dehydrogenase 1 (317 aa).

Residues V17, D38, K43, Y69, and G83–A84 each bind NAD(+). Residues Q86 and R92 each coordinate substrate. Residues S105, A122–N124, and S147 each bind NAD(+). Residue N124–D127 coordinates substrate. D152–R155 serves as a coordination point for substrate. H179 serves as the catalytic Proton acceptor. Y223 bears the Phosphotyrosine mark. T232 lines the substrate pocket.

Belongs to the LDH/MDH superfamily. LDH family. As to quaternary structure, homotetramer.

The protein resides in the cytoplasm. The catalysed reaction is (S)-lactate + NAD(+) = pyruvate + NADH + H(+). It functions in the pathway fermentation; pyruvate fermentation to lactate; (S)-lactate from pyruvate: step 1/1. Functionally, catalyzes the conversion of lactate to pyruvate (Potential). Appears to be the primary factor that allows S.aureus growth during nitrosative stress in both aerobically and anaerobically cultured cells. This is L-lactate dehydrogenase 1 from Staphylococcus aureus (strain JH1).